The following is a 277-amino-acid chain: F420-dependent methylenetetrahydromethanopterin dehydrogenase (277 aa).

Belongs to the MTD family.

It catalyses the reaction 5,10-methylenetetrahydromethanopterin + oxidized coenzyme F420-(gamma-L-Glu)(n) + 2 H(+) = 5,10-methenyl-5,6,7,8-tetrahydromethanopterin + reduced coenzyme F420-(gamma-L-Glu)(n). It functions in the pathway one-carbon metabolism; methanogenesis from CO(2); 5,10-methylene-5,6,7,8-tetrahydromethanopterin from 5,10-methenyl-5,6,7,8-tetrahydromethanopterin (coenzyme F420 route): step 1/1. In terms of biological role, catalyzes the reversible reduction of methenyl-H(4)MPT(+) to methylene-H(4)MPT. The sequence is that of F420-dependent methylenetetrahydromethanopterin dehydrogenase from Methanococcus maripaludis (strain C7 / ATCC BAA-1331).